A 478-amino-acid chain; its full sequence is Adenosylhomocysteinase (478 aa).

The substrate site is built by T67, D144, and E204. 205 to 207 (TTT) lines the NAD(+) pocket. Substrate contacts are provided by K234 and D238. NAD(+) is bound by residues N239, 268-273 (GYGDVG), E291, N326, 347-349 (IGH), and N392.

This sequence belongs to the adenosylhomocysteinase family. Requires NAD(+) as cofactor.

The protein localises to the cytoplasm. The catalysed reaction is S-adenosyl-L-homocysteine + H2O = L-homocysteine + adenosine. It participates in amino-acid biosynthesis; L-homocysteine biosynthesis; L-homocysteine from S-adenosyl-L-homocysteine: step 1/1. Its function is as follows. May play a key role in the regulation of the intracellular concentration of adenosylhomocysteine. The protein is Adenosylhomocysteinase of Nitrosomonas eutropha (strain DSM 101675 / C91 / Nm57).